Reading from the N-terminus, the 456-residue chain is Kynurenine 3-monooxygenase (456 aa).

This sequence belongs to the aromatic-ring hydroxylase family. KMO subfamily. It depends on FAD as a cofactor.

The enzyme catalyses L-kynurenine + NADPH + O2 + H(+) = 3-hydroxy-L-kynurenine + NADP(+) + H2O. The protein operates within cofactor biosynthesis; NAD(+) biosynthesis; quinolinate from L-kynurenine: step 1/3. Functionally, catalyzes the hydroxylation of L-kynurenine (L-Kyn) to form 3-hydroxy-L-kynurenine (L-3OHKyn). Required for synthesis of quinolinic acid. The chain is Kynurenine 3-monooxygenase from Xanthomonas campestris pv. campestris (strain 8004).